Here is a 244-residue protein sequence, read N- to C-terminus: MQALQASRLTGQARPCSSSVVPRCSSLHVSRPISSGVSSSQELSSRSSAPATKSWRSSGRVITRATATAAPSELDDVGVSAAAESIIQYAINFARASETYEVHSWMVLMGILKYETCTAAKILKSLGLEDLYGAWNEVLWALNVCDGLQPRSFVTDIKFADRAFKVITAASDFAVWHGKDKMYSEDVLMALAAGGVLEDLFPDLNLSFERVRKAVEKESGRRYQLPDETEEAGPLKSEDDVSFL.

A chloroplast-targeting transit peptide spans 1–64; the sequence is MQALQASRLT…WRSSGRVITR (64 aa). Residues 30-48 show a composition bias toward low complexity; that stretch reads SRPISSGVSSSQELSSRSS. Disordered stretches follow at residues 30-55 and 220-244; these read SRPI…TKSW and GRRY…VSFL.

Belongs to the ClpA/ClpB family.

Its subcellular location is the plastid. The protein localises to the chloroplast. Its function is as follows. Accessory protein regulating the assembly of the plastid Clp protease system. The chain is ATP-dependent Clp protease ATP-binding subunit CLPT4, chloroplastic from Chlamydomonas reinhardtii (Chlamydomonas smithii).